A 279-amino-acid polypeptide reads, in one-letter code: Acyl-[acyl-carrier-protein]--UDP-N-acetylglucosamine O-acyltransferase (279 aa).

Belongs to the transferase hexapeptide repeat family. LpxA subfamily. As to quaternary structure, homotrimer.

Its subcellular location is the cytoplasm. The catalysed reaction is a (3R)-hydroxyacyl-[ACP] + UDP-N-acetyl-alpha-D-glucosamine = a UDP-3-O-[(3R)-3-hydroxyacyl]-N-acetyl-alpha-D-glucosamine + holo-[ACP]. It participates in glycolipid biosynthesis; lipid IV(A) biosynthesis; lipid IV(A) from (3R)-3-hydroxytetradecanoyl-[acyl-carrier-protein] and UDP-N-acetyl-alpha-D-glucosamine: step 1/6. Its function is as follows. Involved in the biosynthesis of lipid A, a phosphorylated glycolipid that anchors the lipopolysaccharide to the outer membrane of the cell. The chain is Acyl-[acyl-carrier-protein]--UDP-N-acetylglucosamine O-acyltransferase from Mesorhizobium japonicum (strain LMG 29417 / CECT 9101 / MAFF 303099) (Mesorhizobium loti (strain MAFF 303099)).